We begin with the raw amino-acid sequence, 352 residues long: 2'-dehydrokanamycin reductase (352 aa).

Belongs to the NAD(P)-dependent epimerase/dehydratase family.

It carries out the reaction 2'-dehydrokanamycin A + NADPH + H(+) = kanamycin A + NADP(+). Its pathway is antibiotic biosynthesis; kanamycin biosynthesis. Mediates the conversion of 2'-dehydrokanamycin A into kanamycin A. This is 2'-dehydrokanamycin reductase (kanK) from Streptomyces kanamyceticus.